We begin with the raw amino-acid sequence, 61 residues long: UPF0434 protein PSPPH_1629 (61 aa).

It belongs to the UPF0434 family.

In Pseudomonas savastanoi pv. phaseolicola (strain 1448A / Race 6) (Pseudomonas syringae pv. phaseolicola (strain 1448A / Race 6)), this protein is UPF0434 protein PSPPH_1629.